Here is a 663-residue protein sequence, read N- to C-terminus: Polyunsaturated fatty acid lipoxygenase ALOX15 (663 aa).

The PLAT domain occupies 2–115; that stretch reads GLYRVRVSTG…ILSLPEGTAR (114 aa). Residues 116–663 form the Lipoxygenase domain; it reads TVVDDPQGLF…PSRVENSVAI (548 aa). Positions 361, 366, 541, 545, and 663 each coordinate Fe cation.

This sequence belongs to the lipoxygenase family. In terms of assembly, interacts with PEBP1; in response to IL13/interleukin-13, prevents the interaction of PEBP1 with RAF1 to activate the ERK signaling cascade. Requires Fe cation as cofactor.

Its subcellular location is the cytoplasm. It is found in the cytosol. The protein resides in the cell membrane. It localises to the lipid droplet. It carries out the reaction (5Z,8Z,11Z,14Z)-eicosatetraenoate + O2 = (12S)-hydroperoxy-(5Z,8Z,10E,14Z)-eicosatetraenoate. The catalysed reaction is (5Z,8Z,11Z,14Z)-eicosatetraenoate + O2 = (15S)-hydroperoxy-(5Z,8Z,11Z,13E)-eicosatetraenoate. It catalyses the reaction (9Z,12Z)-octadecadienoate + O2 = (13S)-hydroperoxy-(9Z,11E)-octadecadienoate. The enzyme catalyses (5Z,8Z,11Z,14Z)-eicosatetraenoate + 2 O2 = (14R,15S)-dihydroperoxy-(5Z,8Z,10E,12E)-eicosatetraenoate. It carries out the reaction (5Z,8Z,11Z,14Z)-eicosatetraenoate + 2 O2 = (8S,15S)-dihydroperoxy-(5Z,9E,11Z,13E)-eicosatetraenoate. The catalysed reaction is (14S,15R)-epoxy-(5Z,8Z,11Z)-eicosatrienoate + O2 = (8S)-hydroperoxy-(14S,15R)-epoxy-(5Z,9E,11Z)-eicosatrienoate. It catalyses the reaction (14S,15R)-epoxy-(5Z,8Z,11Z)-eicosatrienoate + O2 = (12S)-hydroperoxy-(14S,15R)-epoxy-(5Z,8Z,10E)-eicosatrienoate. The enzyme catalyses (14R,15S)-epoxy-(5Z,8Z,11Z)-eicosatrienoate + O2 = (5S)-hydroperoxy-(14R,15S)-epoxy-(6E,8Z,11Z)-eicosatrienoate. It carries out the reaction (14R,15S)-epoxy-(5Z,8Z,11Z)-eicosatrienoate + O2 = (12S)-hydroperoxy-(14R,15S)-epoxy-(5Z,8Z,10E)-eicosatrienoate. The catalysed reaction is (15R)-hydroperoxy-(5Z,8Z,11Z,13E)-eicosatetraenoate = 15-oxo-(5Z,8Z,11Z,13E)-eicosatetraenoate + H2O. It catalyses the reaction (15S)-hydroperoxy-(5Z,8Z,11Z,13E)-eicosatetraenoate = (14S,15S)-epoxy-(5Z,8Z,10E,12E)-eicosatetraenoate + H2O. The enzyme catalyses (12S)-hydroperoxy-(5Z,8Z,10E,14Z)-eicosatetraenoate = (8S)-hydroxy-(11S,12S)-epoxy-(5Z,9E,14Z)-eicosatrienoate. It carries out the reaction (4Z,7Z,10Z,13Z,16Z,19Z)-docosahexaenoate + O2 = 14-hydroperoxy-(4Z,7Z,10Z,12E,16Z,19Z)-docosahexaenoate. The catalysed reaction is (4Z,7Z,10Z,13Z,16Z)-docosapentaenoate + O2 = 14-hydroperoxy-(4Z,7Z,10Z,12E,16Z)-docosapentaenoate. It catalyses the reaction (7Z,10Z,13Z,16Z,19Z)-docosapentaenoate + O2 = 14-hydroperoxy-(7Z,10Z,12E,16Z,19Z)-docosapentaenoate. The enzyme catalyses (4Z,7Z,10Z,13Z,16Z,19Z)-docosahexaenoate + O2 = (14S)-hydroperoxy-(4Z,7Z,10Z,12E,16Z,19Z)-docosahexaenoate. It carries out the reaction (4Z,7Z,10Z,13Z,16Z,19Z)-docosahexaenoate + O2 = (17S)-hydroperoxy-(4Z,7Z,10Z,13Z,15E,19Z)-docosahexaenoate. The catalysed reaction is (7S)-hydroperoxy-(4Z,8E,10Z,13Z,16Z,19Z)-docosahexaenoate + O2 = (7S,14S)-dihydroperoxy-(4Z,8E,10Z,12E,16Z,19Z)-docosahexaenoate. It catalyses the reaction (7S)-hydroperoxy-(4Z,8E,10Z,13Z,16Z,19Z)-docosahexaenoate + O2 = (7S,17S)-dihydroperoxy-(4Z,8E,10Z,13Z,15E,19Z)-docosahexaenoate. The enzyme catalyses (4Z,7Z,10Z,13Z,16Z,19Z)-docosahexaenoate + O2 = (11S)-hydroperoxy-(4Z,7Z,9E,13Z,16Z,19Z)-docosahexaenoate. It carries out the reaction N-(5Z,8Z,11Z,14Z)-eicosatetraenoyl-taurine + O2 = N-(12S)-hydroperoxy-(5Z,8Z,10E,14Z)-eicosatetraenoyl-taurine. The catalysed reaction is N-(5Z,8Z,11Z,14Z)-eicosatetraenoyl-gamma-aminobutanoate + O2 = N-(12S)-hydroperoxy-(5Z,8Z,10E,14Z)-eicosatetraenoyl-gamma-aminobutanoate. It catalyses the reaction N-(5Z,8Z,11Z,14Z)-eicosatetraenoyl-glycine + O2 = N-(12S)-hydroperoxy-(5Z,8Z,10E,14Z)-eicosatetraenoyl-glycine. The enzyme catalyses N-(5Z,8Z,11Z,14Z)-eicosatetraenoyl-L-alanine + O2 = N-(12S)-hydroperoxy-(5Z,8Z,10E,14Z)-eicosatetraenoyl-alanine. It carries out the reaction N-(5Z,8Z,11Z,14Z)-eicosatetraenoyl-taurine + O2 = N-(15S)-hydroperoxy-(5Z,8Z,11Z,13E)-eicosatetraenoyl-taurine. The catalysed reaction is N-(5Z,8Z,11Z,14Z)-eicosatetraenoyl-gamma-aminobutanoate + O2 = N-(15S)-hydroperoxy-(5Z,8Z,11Z,13E)-eicosatetraenoyl-gamma-aminobutanoate. It catalyses the reaction N-(5Z,8Z,11Z,14Z)-eicosatetraenoyl-glycine + O2 = N-(15S)-hydroperoxy-(5Z,8Z,11Z,13E)-eicosatetraenoyl-glycine. The enzyme catalyses N-(5Z,8Z,11Z,14Z)-eicosatetraenoyl-L-alanine + O2 = N-(15S)-hydroperoxy-(5Z,8Z,11Z,13E)-eicosatetraenoyl-alanine. It functions in the pathway lipid metabolism; hydroperoxy eicosatetraenoic acid biosynthesis. Its function is as follows. Non-heme iron-containing dioxygenase that catalyzes the stereo-specific peroxidation of free and esterified polyunsaturated fatty acids generating a spectrum of bioactive lipid mediators. It inserts peroxyl groups at C12 or C15 of arachidonate ((5Z,8Z,11Z,14Z)-eicosatetraenoate) producing both 12-hydroperoxyeicosatetraenoate/12-HPETE and 15-hydroperoxyeicosatetraenoate/15-HPETE. It may then act on 12-HPETE to produce hepoxilins, which may show pro-inflammatory properties. Can also peroxidize linoleate ((9Z,12Z)-octadecadienoate) to 13-hydroperoxyoctadecadienoate. May participate in the sequential oxidations of DHA ((4Z,7Z,10Z,13Z,16Z,19Z)-docosahexaenoate) to generate specialized pro-resolving mediators (SPMs)like resolvin D5 ((7S,17S)-diHPDHA) and (7S,14S)-diHPDHA, that actively down-regulate the immune response and have anti-aggregation properties with platelets. Can convert epoxy fatty acids to hydroperoxy-epoxides derivatives followed by an intramolecular nucleophilic substitution leading to the formation of monocyclic endoperoxides. Plays an important role during the maintenance of self-tolerance by peroxidizing membrane-bound phosphatidylethanolamine which can then signal the sorting process for clearance of apoptotic cells during inflammation and prevent an autoimmune response. In addition to its role in the immune and inflammatory responses, this enzyme may play a role in epithelial wound healing in the cornea through production of lipoxin A4 (LXA(4)) and docosahexaenoic acid-derived neuroprotectin D1 (NPD1; 10R,17S-HDHA), both lipid autacoids exhibit anti-inflammatory and neuroprotective properties. Furthermore, it may regulate actin polymerization which is crucial for several biological processes such as the phagocytosis of apoptotic cells. It is also implicated in the generation of endogenous ligands for peroxisome proliferator activated receptor (PPAR-gamma), hence modulating macrophage development and function. It may also exert a negative effect on skeletal development by regulating bone mass through this pathway. As well as participates in ER stress and downstream inflammation in adipocytes, pancreatic islets, and liver. Finally, it is also involved in the cellular response to IL13/interleukin-13. The protein is Polyunsaturated fatty acid lipoxygenase ALOX15 of Sus scrofa (Pig).